A 382-amino-acid polypeptide reads, in one-letter code: Chaperone protein DnaJ 1 (382 aa).

Positions 4-68 (DYYGILGVDR…DKRRIVDMGG (65 aa)) constitute a J domain. A CR-type zinc finger spans residues 134-216 (GAKKDLTLDT…CAGDGRVRAR (83 aa)). Residues C147, C150, C164, C167, C190, C193, C204, and C207 each coordinate Zn(2+). CXXCXGXG motif repeat units follow at residues 147–154 (CTKCHGSG), 164–171 (CGTCNGAG), 190–197 (CHTCDGTG), and 204–211 (CTECAGDG).

The protein belongs to the DnaJ family. Homodimer. It depends on Zn(2+) as a cofactor.

The protein localises to the cytoplasm. Its function is as follows. Participates actively in the response to hyperosmotic and heat shock by preventing the aggregation of stress-denatured proteins and by disaggregating proteins, also in an autonomous, DnaK-independent fashion. Unfolded proteins bind initially to DnaJ; upon interaction with the DnaJ-bound protein, DnaK hydrolyzes its bound ATP, resulting in the formation of a stable complex. GrpE releases ADP from DnaK; ATP binding to DnaK triggers the release of the substrate protein, thus completing the reaction cycle. Several rounds of ATP-dependent interactions between DnaJ, DnaK and GrpE are required for fully efficient folding. Also involved, together with DnaK and GrpE, in the DNA replication of plasmids through activation of initiation proteins. The chain is Chaperone protein DnaJ 1 from Corynebacterium glutamicum (strain ATCC 13032 / DSM 20300 / JCM 1318 / BCRC 11384 / CCUG 27702 / LMG 3730 / NBRC 12168 / NCIMB 10025 / NRRL B-2784 / 534).